A 207-amino-acid polypeptide reads, in one-letter code: 2,3-bisphosphoglycerate-dependent phosphoglycerate mutase (207 aa).

Residues 10–17, 23–24, Arg62, 89–92, Lys100, 116–117, and 160–161 each bind substrate; these read RHGQSEWN, TG, ERDY, RR, and GN. The active-site Tele-phosphohistidine intermediate is His11. Residue Glu89 is the Proton donor/acceptor of the active site.

The protein belongs to the phosphoglycerate mutase family. BPG-dependent PGAM subfamily. As to quaternary structure, homodimer.

The catalysed reaction is (2R)-2-phosphoglycerate = (2R)-3-phosphoglycerate. The protein operates within carbohydrate degradation; glycolysis; pyruvate from D-glyceraldehyde 3-phosphate: step 3/5. Functionally, catalyzes the interconversion of 2-phosphoglycerate and 3-phosphoglycerate. The sequence is that of 2,3-bisphosphoglycerate-dependent phosphoglycerate mutase from Bradyrhizobium sp. (strain BTAi1 / ATCC BAA-1182).